A 531-amino-acid polypeptide reads, in one-letter code: Lysine--tRNA ligase, mitochondrial (531 aa).

Residues 1–18 (MISRGLLSKGILSIIKRK) constitute a mitochondrion transit peptide.

Belongs to the class-II aminoacyl-tRNA synthetase family.

The protein resides in the mitochondrion. It carries out the reaction tRNA(Lys) + L-lysine + ATP = L-lysyl-tRNA(Lys) + AMP + diphosphate. The protein is Lysine--tRNA ligase, mitochondrial (msk1) of Schizosaccharomyces pombe (strain 972 / ATCC 24843) (Fission yeast).